The chain runs to 602 residues: Oligoendopeptidase F, chromosomal (602 aa).

Histidine 388 is a binding site for Zn(2+). Glutamate 389 is a catalytic residue. The Zn(2+) site is built by histidine 392 and histidine 395.

The protein belongs to the peptidase M3B family. It depends on Zn(2+) as a cofactor.

Hydrolyzes peptides containing between 7 and 17 amino acids with a rather wide specificity. The protein is Oligoendopeptidase F, chromosomal (pepF2) of Lactococcus lactis subsp. cremoris (Streptococcus cremoris).